A 260-amino-acid chain; its full sequence is GDNF family receptor alpha-4 (260 aa).

A signal peptide spans 1-23 (MAHCMESALLLLLLLGSASFTDG). N184 carries N-linked (GlcNAc...) asparagine glycosylation. The GPI-anchor amidated threonine moiety is linked to residue T237. The propeptide at 238–260 (AGCCFPRVSWLYALTALALQALL) is removed in mature form.

The protein belongs to the GDNFR family. As to quaternary structure, interacts with ARTN ligand and RET: forms a 2:2:2 ternary complex composed of ARTN ligand, GFRA3 and RET receptor. Interacts with SORL1. Expressed in many tissues including adrenal medulla, brain neurons, with highest levels in the cerebral cortex and hippocampus. Moderate levels found in the gut circular muscle and myenteric ganglia as well as in other peripheral ganglia, including the sensory dorsal root and trigeminal as well as superior cervical and sympathetic chain ganglia. Isoform a1, isoform a2, isoform b1 and isoform b2 are exclusively found in the thyroid, parthyroid and pituitary glands.

The protein localises to the cell membrane. It localises to the secreted. Its function is as follows. Receptor for persephin (PSPN), a growth factor that exhibits neurotrophic activity on mesencephalic dopaminergic and motor neurons. Acts by binding to its coreceptor, GFRA4, leading to autophosphorylation and activation of the RET receptor. May be important in C-cell development and, in the postnatal development of the adrenal medulla. This chain is GDNF family receptor alpha-4 (Gfra4), found in Mus musculus (Mouse).